The chain runs to 373 residues: Glutamate 5-kinase (373 aa).

ATP is bound at residue Lys-16. Substrate is bound by residues Ser-56, Asp-143, and Asn-155. 175 to 176 (TD) is a binding site for ATP. The region spanning 281-359 (RGVVTLDDGA…TKIETLLGYK (79 aa)) is the PUA domain.

It belongs to the glutamate 5-kinase family.

Its subcellular location is the cytoplasm. It catalyses the reaction L-glutamate + ATP = L-glutamyl 5-phosphate + ADP. The protein operates within amino-acid biosynthesis; L-proline biosynthesis; L-glutamate 5-semialdehyde from L-glutamate: step 1/2. Catalyzes the transfer of a phosphate group to glutamate to form L-glutamate 5-phosphate. The protein is Glutamate 5-kinase of Teredinibacter turnerae (strain ATCC 39867 / T7901).